Consider the following 520-residue polypeptide: Cytochrome b5 reductase 4 (520 aa).

At Met-1 the chain carries N-acetylmethionine. The disordered stretch occupies residues 1 to 27 (MLNVPSQAFPAPGSQQRVASQGRSKVP). Polar residues predominate over residues 13 to 23 (GSQQRVASQGR). One can recognise a Cytochrome b5 heme-binding domain in the interval 54–130 (LIEVTEEELK…LKECLVGRMA (77 aa)). Heme is bound by residues His-89 and His-112. Positions 164–255 (PSSPSYDWFQ…KETVSWKCLG (92 aa)) constitute a CS domain. Positions 272 to 384 (LYYRQCQLIS…SGPEGNFKVS (113 aa)) constitute an FAD-binding FR-type domain. FAD contacts are provided by residues 364 to 379 (DRLQIGDFVSVSGPEG) and 391 to 423 (DLFLLAAGTGFTPMVTVLNHALTHMSSLRKVKL).

It belongs to the flavoprotein pyridine nucleotide cytochrome reductase family. FAD serves as cofactor. Isoform 2 is expressed in testis, brain, skeletal muscle and in the male germline.

Its subcellular location is the endoplasmic reticulum. The catalysed reaction is 2 Fe(III)-[cytochrome b5] + NADH = 2 Fe(II)-[cytochrome b5] + NAD(+) + H(+). In terms of biological role, NADH-cytochrome b5 reductase involved in endoplasmic reticulum stress response pathway. Plays a critical role in protecting pancreatic beta-cells against oxidant stress, possibly by protecting the cell from excess buildup of reactive oxygen species (ROS). This Rattus norvegicus (Rat) protein is Cytochrome b5 reductase 4 (Cyb5r4).